A 285-amino-acid polypeptide reads, in one-letter code: Bifunctional protein FolD (285 aa).

NADP(+) contacts are provided by residues 166–168 and Ile-232; that span reads GAS.

The protein belongs to the tetrahydrofolate dehydrogenase/cyclohydrolase family. Homodimer.

The catalysed reaction is (6R)-5,10-methylene-5,6,7,8-tetrahydrofolate + NADP(+) = (6R)-5,10-methenyltetrahydrofolate + NADPH. It carries out the reaction (6R)-5,10-methenyltetrahydrofolate + H2O = (6R)-10-formyltetrahydrofolate + H(+). It functions in the pathway one-carbon metabolism; tetrahydrofolate interconversion. The NAD(+)-dependent dehydrogenase is activated by inorganic phosphate. Catalyzes the oxidation of 5,10-methylenetetrahydrofolate to 5,10-methenyltetrahydrofolate and then the hydrolysis of 5,10-methenyltetrahydrofolate to 10-formyltetrahydrofolate. In Photobacterium phosphoreum, this protein is Bifunctional protein FolD.